Reading from the N-terminus, the 270-residue chain is 2-dehydro-3-deoxyphosphooctonate aldolase (270 aa).

It belongs to the KdsA family.

It localises to the cytoplasm. It catalyses the reaction D-arabinose 5-phosphate + phosphoenolpyruvate + H2O = 3-deoxy-alpha-D-manno-2-octulosonate-8-phosphate + phosphate. Its pathway is carbohydrate biosynthesis; 3-deoxy-D-manno-octulosonate biosynthesis; 3-deoxy-D-manno-octulosonate from D-ribulose 5-phosphate: step 2/3. It participates in bacterial outer membrane biogenesis; lipopolysaccharide biosynthesis. The protein is 2-dehydro-3-deoxyphosphooctonate aldolase of Helicobacter hepaticus (strain ATCC 51449 / 3B1).